Consider the following 842-residue polypeptide: Protein P (842 aa).

The interval 1–177 (MPLSYQHFRR…FCGSPYSWEQ (177 aa)) is terminal protein domain (TP). Residues 178 to 345 (ELHHGAFLDG…YCLSHLVNLL (168 aa)) are spacer. The interval 186–273 (DGPSRMGEES…AKNIASRSAS (88 aa)) is disordered. Residues 223 to 239 (GPQSQQRPLDRSQQGRS) show a composition bias toward polar residues. Residues 346–689 (EDWGPCTEHG…YLNLYPVARQ (344 aa)) are polymerase/reverse transcriptase domain (RT). Positions 356–599 (RHHIRIPRTP…YSLNFMGYVI (244 aa)) constitute a Reverse transcriptase domain. Mg(2+) contacts are provided by aspartate 428, aspartate 550, and aspartate 551.

This sequence belongs to the hepadnaviridae P protein family.

It catalyses the reaction DNA(n) + a 2'-deoxyribonucleoside 5'-triphosphate = DNA(n+1) + diphosphate. It carries out the reaction Endonucleolytic cleavage to 5'-phosphomonoester.. Its activity is regulated as follows. Activated by host HSP70 and HSP40 in vitro to be able to bind the epsilon loop of the pgRNA. Because deletion of the RNase H region renders the protein partly chaperone-independent, the chaperones may be needed indirectly to relieve occlusion of the RNA-binding site by this domain. Inhibited by several reverse-transcriptase inhibitors: Lamivudine, Adefovir and Entecavir. Its function is as follows. Multifunctional enzyme that converts the viral RNA genome into dsDNA in viral cytoplasmic capsids. This enzyme displays a DNA polymerase activity that can copy either DNA or RNA templates, and a ribonuclease H (RNase H) activity that cleaves the RNA strand of RNA-DNA heteroduplexes in a partially processive 3'- to 5'-endonucleasic mode. Neo-synthesized pregenomic RNA (pgRNA) are encapsidated together with the P protein, and reverse-transcribed inside the nucleocapsid. Initiation of reverse-transcription occurs first by binding the epsilon loop on the pgRNA genome, and is initiated by protein priming, thereby the 5'-end of (-)DNA is covalently linked to P protein. Partial (+)DNA is synthesized from the (-)DNA template and generates the relaxed circular DNA (RC-DNA) genome. After budding and infection, the RC-DNA migrates in the nucleus, and is converted into a plasmid-like covalently closed circular DNA (cccDNA). The activity of P protein does not seem to be necessary for cccDNA generation, and is presumably released from (+)DNA by host nuclear DNA repair machinery. In Homo sapiens (Human), this protein is Protein P.